We begin with the raw amino-acid sequence, 284 residues long: L-fucose dehydrogenase (284 aa).

NAD(+)-binding residues include Arg19, Ile21, Asp40, Lys41, Asp62, Val63, Asn89, Tyr154, Lys158, Ile187, Thr189, and Leu191.

The protein belongs to the short-chain dehydrogenases/reductases (SDR) family.

The enzyme catalyses L-fucose + NAD(+) = L-fucono-1,5-lactone + NADH + H(+). It catalyses the reaction D-arabinose + NAD(+) = D-arabinono-1,5-lactone + NADH + H(+). The catalysed reaction is L-galactose + NAD(+) = L-galactono-1,5-lactone + NADH + H(+). It functions in the pathway carbohydrate degradation; L-fucose degradation. Functionally, catalyzes the NAD(+)-dependent oxidation of L-fucose, yielding L-fucono-1,5-lactone, which rapidly converts spontaneously to L-fucone-1,4-lactone. Can also act on D-arabinose and L-galactose, with lower catalytic efficiency. Does not use NADPH. May be the initial enzyme of the putative L-fucose degradation pathway in mammals. The chain is L-fucose dehydrogenase (HSD17B14) from Oryctolagus cuniculus (Rabbit).